Reading from the N-terminus, the 619-residue chain is DNA mismatch repair protein MutL (619 aa).

This sequence belongs to the DNA mismatch repair MutL/HexB family.

In terms of biological role, this protein is involved in the repair of mismatches in DNA. It is required for dam-dependent methyl-directed DNA mismatch repair. May act as a 'molecular matchmaker', a protein that promotes the formation of a stable complex between two or more DNA-binding proteins in an ATP-dependent manner without itself being part of a final effector complex. This Xylella fastidiosa (strain 9a5c) protein is DNA mismatch repair protein MutL.